A 130-amino-acid chain; its full sequence is Small ribosomal subunit protein uS9 (130 aa).

The segment at 99 to 130 (KRAGLLTRDPRMKERKKPGLKAARRSPQFSKR) is disordered. Basic residues predominate over residues 111–130 (KERKKPGLKAARRSPQFSKR).

Belongs to the universal ribosomal protein uS9 family.

The polypeptide is Small ribosomal subunit protein uS9 (Staphylococcus aureus (strain Mu3 / ATCC 700698)).